Reading from the N-terminus, the 352-residue chain is MRKIILIFFIFLILQNIYAYEKIYDVNHVCYYTLTSVELQKFVKTAEIITPLNADNKTTITKDTILVGNPEENPLTKKYIGFFKIKINKTFPGKNKGIIEKQIINGHTVILLAGSDIQGTYASIITFANLNDIPENPIICETSNKVNIYSTSLNSEYFRDFIEKNILTPKEIEKVKSLSYKLKGKDKKATIENIAKWVANNIKYDYDKCKKIESGKFSWDEYNTPSETVKTKKGVCLDYATLTSALLLNDNIIPYMLDVALYNTSSLKISSYHASVAVKIDNTYFVIDQQPYLIPINEYTAQTFEDNLRIASIVMFRVVKERDGIKLIKEKEVPGIAIYGDLINLLEMRFNN.

It belongs to the UPF0252 family.

This is UPF0252 protein MJ1282 from Methanocaldococcus jannaschii (strain ATCC 43067 / DSM 2661 / JAL-1 / JCM 10045 / NBRC 100440) (Methanococcus jannaschii).